Here is a 489-residue protein sequence, read N- to C-terminus: Acetyl-coenzyme A carboxylase carboxyl transferase subunit beta, chloroplastic (489 aa).

Residues 222 to 489 form the CoA carboxyltransferase N-terminal domain; that stretch reads LWVQCENCYG…FFPLNSNSIK (268 aa). Positions 226, 229, 245, and 248 each coordinate Zn(2+). The C4-type zinc-finger motif lies at 226–248; sequence CENCYGLNYKKFFRSKMNICEQC.

This sequence belongs to the AccD/PCCB family. Acetyl-CoA carboxylase is a heterohexamer composed of biotin carboxyl carrier protein, biotin carboxylase and 2 subunits each of ACCase subunit alpha and ACCase plastid-coded subunit beta (accD). The cofactor is Zn(2+).

It is found in the plastid. The protein resides in the chloroplast stroma. It carries out the reaction N(6)-carboxybiotinyl-L-lysyl-[protein] + acetyl-CoA = N(6)-biotinyl-L-lysyl-[protein] + malonyl-CoA. It functions in the pathway lipid metabolism; malonyl-CoA biosynthesis; malonyl-CoA from acetyl-CoA: step 1/1. In terms of biological role, component of the acetyl coenzyme A carboxylase (ACC) complex. Biotin carboxylase (BC) catalyzes the carboxylation of biotin on its carrier protein (BCCP) and then the CO(2) group is transferred by the transcarboxylase to acetyl-CoA to form malonyl-CoA. This Buxus microphylla (Littleleaf boxwood) protein is Acetyl-coenzyme A carboxylase carboxyl transferase subunit beta, chloroplastic.